The following is a 523-amino-acid chain: Peptide chain release factor 3 (523 aa).

One can recognise a tr-type G domain in the interval 10–277 (KKRRTFAIIS…SFVDLAPAPE (268 aa)). GTP contacts are provided by residues 19 to 26 (SHPDAGKT), 87 to 91 (DTPGH), and 141 to 144 (NKLD).

It belongs to the TRAFAC class translation factor GTPase superfamily. Classic translation factor GTPase family. PrfC subfamily.

Its subcellular location is the cytoplasm. In terms of biological role, increases the formation of ribosomal termination complexes and stimulates activities of RF-1 and RF-2. It binds guanine nucleotides and has strong preference for UGA stop codons. It may interact directly with the ribosome. The stimulation of RF-1 and RF-2 is significantly reduced by GTP and GDP, but not by GMP. This Lactobacillus helveticus (strain DPC 4571) protein is Peptide chain release factor 3.